Consider the following 508-residue polypeptide: GMP synthase [glutamine-hydrolyzing] (508 aa).

The 189-residue stretch at 1–189 (MILVLDFGSQ…ALLVCGCEKT (189 aa)) folds into the Glutamine amidotransferase type-1 domain. Cys-78 functions as the Nucleophile in the catalytic mechanism. Active-site residues include His-163 and Glu-165. The region spanning 190–383 (WGMQHFAQKE…LGISQDFLMR (194 aa)) is the GMPS ATP-PPase domain. 217–223 (SGGVDST) serves as a coordination point for ATP.

As to quaternary structure, homodimer.

It carries out the reaction XMP + L-glutamine + ATP + H2O = GMP + L-glutamate + AMP + diphosphate + 2 H(+). It functions in the pathway purine metabolism; GMP biosynthesis; GMP from XMP (L-Gln route): step 1/1. In terms of biological role, catalyzes the synthesis of GMP from XMP. This Helicobacter pylori (strain Shi470) protein is GMP synthase [glutamine-hydrolyzing].